The primary structure comprises 1220 residues: Formin-F (1220 aa).

Basic residues predominate over residues 1 to 10; sequence MNRIFGRKKK. The interval 1-62 is disordered; sequence MNRIFGRKKK…TNSKSADKFD (62 aa). The GBD/FH3 domain occupies 6–373; the sequence is GRKKKDKDSD…QISVNKPMIG (368 aa). A compositionally biased stretch (basic and acidic residues) spans 11–20; it reads DKDSDEKGST. Polar residues predominate over residues 41–56; that stretch reads AYSSLQPDGNNSTNSK. Residues 392–428 adopt a coiled-coil conformation; that stretch reads VALQSEFQKNIEELAKVKDQLKKANFDLNIANQELSS. 3 disordered regions span residues 461–659, 711–732, and 1049–1192; these read IDSN…KFTV, SQKK…GTVS, and DEAK…KKDI. Composition is skewed to low complexity over residues 501-518 and 525-554; these read SKPP…SSSQ and SNLS…PQQQ. The region spanning 532–655 is the FH1 domain; the sequence is SDSLSNDFKS…NSNKPPANAP (124 aa). Over residues 555 to 564 the composition is skewed to polar residues; it reads NIESTLTPEP. The segment covering 575-638 has biased composition (pro residues); it reads TTPPPAPPAP…GKGGPPPPPG (64 aa). In terms of domain architecture, FH2 spans 656–1054; it reads KFTVSKPTTK…AIKRDEAKAK (399 aa). Residues 711-722 are compositionally biased toward basic and acidic residues; that stretch reads SQKKLEASDKKS. A coiled-coil region spans residues 1032 to 1062; it reads YKDFQRDKEAAERAIKRDEAKAKKAQQLKRM. Polar residues predominate over residues 1066 to 1083; it reads IASSTNNKNPLASSSTSV. The 76-residue stretch at 1083-1158 folds into the DAD domain; that stretch reads VGDGGMVEDI…TPSKSGSRRE (76 aa). Positions 1117 to 1142 are enriched in low complexity; sequence DSSSITTISEQSENSNTSSITITTPS. Residues 1161-1192 are compositionally biased toward basic and acidic residues; that stretch reads TSKSSDKDKEKEKEKEKQCESTESEDINKKDI.

The protein belongs to the formin homology family. Diaphanous subfamily. Interacts (via GBD/FH3 domain) with activated Rho-GTPases.

In terms of biological role, formins play an important role in the nucleation of actin and the formation of linear actin filaments. This is Formin-F (forF) from Dictyostelium discoideum (Social amoeba).